Reading from the N-terminus, the 87-residue chain is Small ribosomal subunit protein bS16 (87 aa).

This sequence belongs to the bacterial ribosomal protein bS16 family.

This Desulfatibacillum aliphaticivorans protein is Small ribosomal subunit protein bS16.